We begin with the raw amino-acid sequence, 417 residues long: Voltage-gated ClC-type chloride channel ClcB (417 aa).

10 helical membrane-spanning segments follow: residues 5–25 (LLIATLIGILAALAVAAFRHA), 54–74 (LITPALGGLAAGLLLWGWQKM), 146–166 (LWIASGAAAGMAGAYHAPLAG), 168–188 (LFIAEILFGTLMLASLGPVVV), 222–242 (VMIVSTGLVAGLCGPLLMWLM), 258–278 (WQLALGGLIVGLLSLLTPTVW), 288–308 (FLLSPPLFSLIGGIFACKILA), 316–336 (GAPGGVFTPTLFVGLSIGMFL), 349–371 (EIAILLGLAGMATLLAATTHAPI), and 380–400 (MTGEYQLLPGLLIACVVASVL).

The protein belongs to the chloride channel (TC 2.A.49) family. ClcB subfamily.

It is found in the cell inner membrane. Its function is as follows. Probably acts as an electrical shunt for an outwardly-directed proton pump that is linked to amino acid decarboxylation, as part of the extreme acid resistance (XAR) response. The sequence is that of Voltage-gated ClC-type chloride channel ClcB from Salmonella dublin (strain CT_02021853).